Here is a 300-residue protein sequence, read N- to C-terminus: UDP-3-O-acyl-N-acetylglucosamine deacetylase (300 aa).

Residues H78, H237, and D241 each contribute to the Zn(2+) site. H264 functions as the Proton donor in the catalytic mechanism.

It belongs to the LpxC family. Zn(2+) serves as cofactor.

It catalyses the reaction a UDP-3-O-[(3R)-3-hydroxyacyl]-N-acetyl-alpha-D-glucosamine + H2O = a UDP-3-O-[(3R)-3-hydroxyacyl]-alpha-D-glucosamine + acetate. Its pathway is glycolipid biosynthesis; lipid IV(A) biosynthesis; lipid IV(A) from (3R)-3-hydroxytetradecanoyl-[acyl-carrier-protein] and UDP-N-acetyl-alpha-D-glucosamine: step 2/6. In terms of biological role, catalyzes the hydrolysis of UDP-3-O-myristoyl-N-acetylglucosamine to form UDP-3-O-myristoylglucosamine and acetate, the committed step in lipid A biosynthesis. In Acinetobacter baumannii (strain ATCC 17978 / DSM 105126 / CIP 53.77 / LMG 1025 / NCDC KC755 / 5377), this protein is UDP-3-O-acyl-N-acetylglucosamine deacetylase.